Here is a 689-residue protein sequence, read N- to C-terminus: DNA ligase (689 aa).

Residues 40–44 (DAEYD), 89–90 (SL), and E121 contribute to the NAD(+) site. K123 serves as the catalytic N6-AMP-lysine intermediate. R144, E179, K295, and K319 together coordinate NAD(+). 4 residues coordinate Zn(2+): C413, C416, C431, and C437. In terms of domain architecture, BRCT spans 610-689 (REQSSLTGKI…AEWLTLVRDI (80 aa)).

It belongs to the NAD-dependent DNA ligase family. LigA subfamily. Mg(2+) is required as a cofactor. The cofactor is Mn(2+).

The enzyme catalyses NAD(+) + (deoxyribonucleotide)n-3'-hydroxyl + 5'-phospho-(deoxyribonucleotide)m = (deoxyribonucleotide)n+m + AMP + beta-nicotinamide D-nucleotide.. Its function is as follows. DNA ligase that catalyzes the formation of phosphodiester linkages between 5'-phosphoryl and 3'-hydroxyl groups in double-stranded DNA using NAD as a coenzyme and as the energy source for the reaction. It is essential for DNA replication and repair of damaged DNA. The protein is DNA ligase of Rickettsia bellii (strain OSU 85-389).